The primary structure comprises 127 residues: Ribosome-binding factor A (127 aa).

Belongs to the RbfA family. As to quaternary structure, monomer. Binds 30S ribosomal subunits, but not 50S ribosomal subunits or 70S ribosomes.

The protein localises to the cytoplasm. Functionally, one of several proteins that assist in the late maturation steps of the functional core of the 30S ribosomal subunit. Associates with free 30S ribosomal subunits (but not with 30S subunits that are part of 70S ribosomes or polysomes). Required for efficient processing of 16S rRNA. May interact with the 5'-terminal helix region of 16S rRNA. The sequence is that of Ribosome-binding factor A from Aromatoleum aromaticum (strain DSM 19018 / LMG 30748 / EbN1) (Azoarcus sp. (strain EbN1)).